We begin with the raw amino-acid sequence, 592 residues long: Glutamine--fructose-6-phosphate aminotransferase [isomerizing] (592 aa).

The Nucleophile; for GATase activity role is filled by cysteine 2. The 216-residue stretch at 2–217 folds into the Glutamine amidotransferase type-2 domain; the sequence is CGIVGYVGRD…DGEIADLTPD (216 aa). SIS domains lie at 277–416 and 441–582; these read IPFK…EREN and VAEK…VDQP. Lysine 587 acts as the For Fru-6P isomerization activity in catalysis.

In terms of assembly, homodimer.

The protein resides in the cytoplasm. The catalysed reaction is D-fructose 6-phosphate + L-glutamine = D-glucosamine 6-phosphate + L-glutamate. Catalyzes the first step in hexosamine metabolism, converting fructose-6P into glucosamine-6P using glutamine as a nitrogen source. The polypeptide is Glutamine--fructose-6-phosphate aminotransferase [isomerizing] (Aquifex aeolicus (strain VF5)).